Consider the following 492-residue polypeptide: Anthranilate synthase component 1 (492 aa).

Residues S48 and P273 to M275 contribute to the L-tryptophan site. Chorismate is bound at residue G308–T309. E335 contacts Mg(2+). Residues Y423, R443, G457–G459, and G459 contribute to the chorismate site. E472 lines the Mg(2+) pocket.

This sequence belongs to the anthranilate synthase component I family. In terms of assembly, heterotetramer consisting of two non-identical subunits: a beta subunit (TrpG) and a large alpha subunit (TrpE). The cofactor is Mg(2+).

It carries out the reaction chorismate + L-glutamine = anthranilate + pyruvate + L-glutamate + H(+). The protein operates within amino-acid biosynthesis; L-tryptophan biosynthesis; L-tryptophan from chorismate: step 1/5. Feedback inhibited by tryptophan. In terms of biological role, part of a heterotetrameric complex that catalyzes the two-step biosynthesis of anthranilate, an intermediate in the biosynthesis of L-tryptophan. In the first step, the glutamine-binding beta subunit (TrpG) of anthranilate synthase (AS) provides the glutamine amidotransferase activity which generates ammonia as a substrate that, along with chorismate, is used in the second step, catalyzed by the large alpha subunit of AS (TrpE) to produce anthranilate. In the absence of TrpG, TrpE can synthesize anthranilate directly from chorismate and high concentrations of ammonia. This Pseudomonas aeruginosa (strain ATCC 15692 / DSM 22644 / CIP 104116 / JCM 14847 / LMG 12228 / 1C / PRS 101 / PAO1) protein is Anthranilate synthase component 1.